A 444-amino-acid polypeptide reads, in one-letter code: Trigger factor (444 aa).

The 86-residue stretch at 166-251 folds into the PPIase FKBP-type domain; the sequence is GDQVVIDFKG…VKAVKAPKAA (86 aa).

This sequence belongs to the FKBP-type PPIase family. Tig subfamily.

It localises to the cytoplasm. It catalyses the reaction [protein]-peptidylproline (omega=180) = [protein]-peptidylproline (omega=0). Its function is as follows. Involved in protein export. Acts as a chaperone by maintaining the newly synthesized protein in an open conformation. Functions as a peptidyl-prolyl cis-trans isomerase. This chain is Trigger factor, found in Cereibacter sphaeroides (strain KD131 / KCTC 12085) (Rhodobacter sphaeroides).